Reading from the N-terminus, the 202-residue chain is Syndecan-2 (202 aa).

The signal sequence occupies residues 1 to 18; it reads MQRAWILLTLGLMACVSA. At 19 to 145 the chain is on the extracellular side; the sequence is ETRTELTSDK…HSDNLFKRTE (127 aa). O-linked (Xyl...) (glycosaminoglycan) serine glycans are attached at residues Ser-41, Ser-55, and Ser-57. 2 disordered regions span residues 41-63 and 88-118; these read SGVYPIDDDDYSSASGSGADEDI and ETMTLKTQSITPAQTESPEETDKEEVDISEA. Residues 91 to 103 are compositionally biased toward polar residues; sequence TLKTQSITPAQTE. Over residues 104–117 the composition is skewed to acidic residues; that stretch reads SPEETDKEEVDISE. Ser-116 carries the phosphoserine modification. A helical membrane pass occupies residues 146–170; sequence VLAAVIAGGVIGFLFAIFLILLLVY. The Cytoplasmic portion of the chain corresponds to 171 to 202; it reads RMRKKDEGSYDLGERKPSSAAYQKAPTKEFYA. The segment at 179-202 is disordered; sequence SYDLGERKPSSAAYQKAPTKEFYA. Residue Ser-188 is modified to Phosphoserine.

The protein belongs to the syndecan proteoglycan family. In terms of assembly, interacts (via cytoplasmic domain) with SARM1. Forms a complex with SDCBP and PDCD6IP. In terms of processing, O-glycosylated; contains both heparan sulfate and chondroitin sulfate. Post-translationally, phosphorylated on serine residues. In terms of tissue distribution, preferential expression in cells of mesenchymal origin.

It is found in the membrane. Cell surface proteoglycan which regulates dendritic arbor morphogenesis. The protein is Syndecan-2 (Sdc2) of Mus musculus (Mouse).